The primary structure comprises 117 residues: Carboxysome shell protein CcmK4 (117 aa).

The 87-residue stretch at 5 to 91 folds into the BMC domain; that stretch reads AVGSLETKGF…PHENVECVLP (87 aa).

The protein belongs to the bacterial microcompartments protein family. CcmK subfamily. Crystallizes as a homohexamer. Interacts stably with CcmK3, forming heterohexamers that can make dodecamers. Heterohexamers have a 1:2 CcmK3:CcmK4 stoichiometry. Upon expression in E.coli forms large aggregates.

The protein resides in the carboxysome. A probably essential, minor shell protein of the carboxysome, a polyhedral inclusion where RuBisCO (ribulose bisphosphate carboxylase, rbcL-rbcS) is sequestered. Hexamers form sheets that form the facets of the polyhedral carboxysome. In PCC 7418 there are several CcmK paralogs with presumably functional differences. This subunit can probably make both homohexamers and heterohexamers with CcmK3. Both hexamers can also make dodecamers, formation depends on buffer conditions. The sequence is that of Carboxysome shell protein CcmK4 from Halothece sp. (strain PCC 7418) (Synechococcus sp. (strain PCC 7418)).